The chain runs to 367 residues: 2-aminoethylphosphonate--pyruvate transaminase (367 aa).

The residue at position 194 (lysine 194) is an N6-(pyridoxal phosphate)lysine.

Belongs to the class-V pyridoxal-phosphate-dependent aminotransferase family. PhnW subfamily. As to quaternary structure, homodimer. Pyridoxal 5'-phosphate is required as a cofactor.

It carries out the reaction (2-aminoethyl)phosphonate + pyruvate = phosphonoacetaldehyde + L-alanine. In terms of biological role, involved in phosphonate degradation. This chain is 2-aminoethylphosphonate--pyruvate transaminase, found in Salmonella paratyphi A (strain ATCC 9150 / SARB42).